The following is a 226-amino-acid chain: Cytidylate kinase (226 aa).

12 to 20 (GPSGAGKGT) contributes to the ATP binding site.

It belongs to the cytidylate kinase family. Type 1 subfamily.

It localises to the cytoplasm. It catalyses the reaction CMP + ATP = CDP + ADP. The enzyme catalyses dCMP + ATP = dCDP + ADP. This chain is Cytidylate kinase, found in Vibrio vulnificus (strain YJ016).